The chain runs to 162 residues: Phosphopantetheine adenylyltransferase (162 aa).

Ser11 provides a ligand contact to substrate. ATP contacts are provided by residues 11-12 (SF) and His19. Lys43, Thr75, and Arg89 together coordinate substrate. Residues 90–92 (GLR), Glu100, and 125–131 (YAFLSSS) each bind ATP.

It belongs to the bacterial CoaD family. Homohexamer. Mg(2+) serves as cofactor.

It is found in the cytoplasm. The catalysed reaction is (R)-4'-phosphopantetheine + ATP + H(+) = 3'-dephospho-CoA + diphosphate. It functions in the pathway cofactor biosynthesis; coenzyme A biosynthesis; CoA from (R)-pantothenate: step 4/5. In terms of biological role, reversibly transfers an adenylyl group from ATP to 4'-phosphopantetheine, yielding dephospho-CoA (dPCoA) and pyrophosphate. The protein is Phosphopantetheine adenylyltransferase of Finegoldia magna (strain ATCC 29328 / DSM 20472 / WAL 2508) (Peptostreptococcus magnus).